The sequence spans 502 residues: Lysine--tRNA ligase (502 aa).

The disordered stretch occupies residues 1-22; the sequence is MSDHEQAQAQSQDENQIMAERR. 2 residues coordinate Mg(2+): glutamate 413 and glutamate 420.

This sequence belongs to the class-II aminoacyl-tRNA synthetase family. As to quaternary structure, homodimer. Requires Mg(2+) as cofactor.

The protein localises to the cytoplasm. It catalyses the reaction tRNA(Lys) + L-lysine + ATP = L-lysyl-tRNA(Lys) + AMP + diphosphate. This Chromobacterium violaceum (strain ATCC 12472 / DSM 30191 / JCM 1249 / CCUG 213 / NBRC 12614 / NCIMB 9131 / NCTC 9757 / MK) protein is Lysine--tRNA ligase.